The sequence spans 32 residues: Cyclotide glopa B (32 aa).

Positions 1 to 32 (GGSVPCIETCVWTGCFLVPGCSCKSDKKCYLN) form a cross-link, cyclopeptide (Gly-Asn). Cystine bridges form between Cys-6–Cys-21, Cys-10–Cys-23, and Cys-15–Cys-29.

Post-translationally, this is a cyclic peptide.

Its function is as follows. Probably participates in a plant defense mechanism. The sequence is that of Cyclotide glopa B from Gloeospermum pauciflorum.